Here is a 179-residue protein sequence, read N- to C-terminus: tRNA (cytidine(56)-2'-O)-methyltransferase (179 aa).

Residues Leu82, 112-116 (GAEKV), and 130-137 (VGNQPHSE) each bind S-adenosyl-L-methionine.

It belongs to the aTrm56 family. In terms of assembly, homodimer.

Its subcellular location is the cytoplasm. The enzyme catalyses cytidine(56) in tRNA + S-adenosyl-L-methionine = 2'-O-methylcytidine(56) in tRNA + S-adenosyl-L-homocysteine + H(+). In terms of biological role, specifically catalyzes the AdoMet-dependent 2'-O-ribose methylation of cytidine at position 56 in tRNAs. The chain is tRNA (cytidine(56)-2'-O)-methyltransferase from Methanococcus maripaludis (strain C5 / ATCC BAA-1333).